A 535-amino-acid polypeptide reads, in one-letter code: Heparanase (535 aa).

The N-terminal stretch at Met1–Thr27 is a signal peptide. Heparan sulfate group is bound by residues Asp54–Ser56 and Thr89. Positions Pro102–Gln149 are cleaved as a propeptide — linker peptide. Cys119 and Cys171 are joined by a disulfide. Lys150–Asn154 lines the heparan sulfate group pocket. Asn192 and Asn209 each carry an N-linked (GlcNAc...) asparagine glycan. The active-site Proton donor is the Glu217. Heparan sulfate group is bound by residues Gln262 to Arg272, His288, and Arg295. Residues Glu280–Arg409 form a required for heterodimerization with the heparanase 8 kDa subunit region. Glu335 acts as the Nucleophile in catalysis. Heparan sulfate group is bound by residues Tyr340 to Gly342 and Gly381 to Tyr383. Cys429 and Cys534 are joined by a disulfide. Asn451 carries N-linked (GlcNAc...) asparagine glycosylation. The required for transferring proheparanase to the Golgi apparatus, secretion and subsequent enzyme activity and for enhancement of PKB/AKT1 phosphorylation stretch occupies residues Phe519–Ile535.

Belongs to the glycosyl hydrolase 79 family. Heterodimer; heterodimer formation between the 8 kDa and the 50 kDa subunits is required for enzyme activity. Interacts with TF; the interaction, inhibited by heparin, enhances the generation of activated factor X and activates coagulation. Interacts with HRG; the interaction is enhanced at acidic pH, partially inhibits binding of HPSE to cell surface receptors and modulates its enzymatic activity. Interacts with SDC1; the interaction enhances the shedding of SDC1. Interacts with HPSE2. Proteolytically processed. The cleavage of the 65 kDa form leads to the generation of a linker peptide, and the 8 kDa and 50 kDa products. The active form, the 8/50 kDa heterodimer, is resistant to degradation. Complete removal of the linker peptide appears to be a prerequisite to the complete activation of the enzyme. Post-translationally, N-glycosylated. Glycosylation of the 50 kDa subunit appears to be essential for its solubility. As to expression, expressed in skin, mainly in the stratum granulosum and the first layer of the stratum corneum in the upper part of the epidermis. Also detected in hair follicles and in sebaceous glands.

The protein localises to the lysosome membrane. It is found in the secreted. Its subcellular location is the nucleus. It catalyses the reaction endohydrolysis of (1-&gt;4)-beta-D-glycosidic bonds of heparan sulfate chains in heparan sulfate proteoglycan.. Its activity is regulated as follows. Inhibited by EDTA and activated by calcium and magnesium. Inhibited by laminarin sulfate and, to a lower extent, by heparin and sulfamin. Its function is as follows. Endoglycosidase that cleaves heparan sulfate proteoglycans (HSPGs) into heparan sulfate side chains and core proteoglycans. Participates in extracellular matrix (ECM) degradation and remodeling. Selectively cleaves the linkage between a glucuronic acid unit and an N-sulfo glucosamine unit carrying either a 3-O-sulfo or a 6-O-sulfo group. Can also cleave the linkage between a glucuronic acid unit and an N-sulfo glucosamine unit carrying a 2-O-sulfo group, but not linkages between a glucuronic acid unit and a 2-O-sulfated iduronic acid moiety. It is essentially inactive at neutral pH but becomes active under acidic conditions such as during tumor invasion and in inflammatory processes. Facilitates cell migration associated with metastasis, wound healing and inflammation. Enhances shedding of syndecans, and increases endothelial invasion and angiogenesis in myelomas. Acts as a procoagulant by increasing the generation of activation factor X in the presence of tissue factor and activation factor VII. Increases cell adhesion to the extracellular matrix (ECM), independent of its enzymatic activity. Induces AKT1/PKB phosphorylation via lipid rafts increasing cell mobility and invasion. Heparin increases this AKT1/PKB activation. Regulates osteogenesis. Enhances angiogenesis through up-regulation of SRC-mediated activation of VEGF. Implicated in hair follicle inner root sheath differentiation and hair homeostasis. The chain is Heparanase (Hpse) from Mus musculus (Mouse).